Consider the following 147-residue polypeptide: Protein-export protein SecB (147 aa).

It belongs to the SecB family. In terms of assembly, homotetramer, a dimer of dimers. One homotetramer interacts with 1 SecA dimer.

Its subcellular location is the cytoplasm. Functionally, one of the proteins required for the normal export of preproteins out of the cell cytoplasm. It is a molecular chaperone that binds to a subset of precursor proteins, maintaining them in a translocation-competent state. It also specifically binds to its receptor SecA. The sequence is that of Protein-export protein SecB from Neisseria meningitidis serogroup B (strain ATCC BAA-335 / MC58).